Here is a 337-residue protein sequence, read N- to C-terminus: Ketol-acid reductoisomerase (NAD(P)(+)) (337 aa).

Residues 2 to 187 (ARMFYDADAN…GCTRAGVIET (186 aa)) form the KARI N-terminal Rossmann domain. Residues 25–28 (FGSQ), Arg-48, and 88–91 (DEVQ) each bind NADP(+). Residue His-113 is part of the active site. Gly-139 contacts NADP(+). Positions 188–333 (SFQEETETDL…AELRGMMPWL (146 aa)) constitute a KARI C-terminal knotted domain. Mg(2+)-binding residues include Asp-196, Glu-200, Glu-232, and Glu-236. Ser-257 is a binding site for substrate.

It belongs to the ketol-acid reductoisomerase family. Requires Mg(2+) as cofactor.

The catalysed reaction is (2R)-2,3-dihydroxy-3-methylbutanoate + NAD(+) = (2S)-2-acetolactate + NADH + H(+). The enzyme catalyses (2R)-2,3-dihydroxy-3-methylbutanoate + NADP(+) = (2S)-2-acetolactate + NADPH + H(+). It functions in the pathway amino-acid biosynthesis; L-isoleucine biosynthesis; L-isoleucine from 2-oxobutanoate: step 2/4. The protein operates within amino-acid biosynthesis; L-valine biosynthesis; L-valine from pyruvate: step 2/4. Functionally, involved in the biosynthesis of branched-chain amino acids (BCAA). Catalyzes an alkyl-migration followed by a ketol-acid reduction of (S)-2-acetolactate (S2AL) to yield (R)-2,3-dihydroxy-isovalerate. In the isomerase reaction, S2AL is rearranged via a Mg-dependent methyl migration to produce 3-hydroxy-3-methyl-2-ketobutyrate (HMKB). In the reductase reaction, this 2-ketoacid undergoes a metal-dependent reduction by NADPH or NADH to yield (R)-2,3-dihydroxy-isovalerate. The chain is Ketol-acid reductoisomerase (NAD(P)(+)) from Syntrophomonas wolfei subsp. wolfei (strain DSM 2245B / Goettingen).